We begin with the raw amino-acid sequence, 210 residues long: Endonuclease III (210 aa).

A HhH domain is found at 108–127 (FKALIKLPGVGRKTANVVLN). [4Fe-4S] cluster-binding residues include cysteine 187, cysteine 194, cysteine 197, and cysteine 203.

This sequence belongs to the Nth/MutY family. Requires [4Fe-4S] cluster as cofactor.

The catalysed reaction is 2'-deoxyribonucleotide-(2'-deoxyribose 5'-phosphate)-2'-deoxyribonucleotide-DNA = a 3'-end 2'-deoxyribonucleotide-(2,3-dehydro-2,3-deoxyribose 5'-phosphate)-DNA + a 5'-end 5'-phospho-2'-deoxyribonucleoside-DNA + H(+). DNA repair enzyme that has both DNA N-glycosylase activity and AP-lyase activity. The DNA N-glycosylase activity releases various damaged pyrimidines from DNA by cleaving the N-glycosidic bond, leaving an AP (apurinic/apyrimidinic) site. The AP-lyase activity cleaves the phosphodiester bond 3' to the AP site by a beta-elimination, leaving a 3'-terminal unsaturated sugar and a product with a terminal 5'-phosphate. The polypeptide is Endonuclease III (Rickettsia conorii (strain ATCC VR-613 / Malish 7)).